The following is a 237-amino-acid chain: Ribosomal RNA small subunit methyltransferase G (237 aa).

Residues Gly-78, Phe-83, 129–130, and Arg-148 each bind S-adenosyl-L-methionine; that span reads AE. Residues 218-237 form a disordered region; that stretch reads KKETPNKFPRKAGMPNKRPL.

This sequence belongs to the methyltransferase superfamily. RNA methyltransferase RsmG family.

The protein localises to the cytoplasm. Its function is as follows. Specifically methylates the N7 position of a guanine in 16S rRNA. This Streptococcus suis (strain 98HAH33) protein is Ribosomal RNA small subunit methyltransferase G.